A 72-amino-acid polypeptide reads, in one-letter code: Conotoxin Gla(2)-TxVI/B (72 aa).

A signal peptide spans Met-1–Ala-19. Positions Leu-20–Arg-44 are excised as a propeptide. Intrachain disulfides connect Cys-48–Cys-62, Cys-55–Cys-66, and Cys-61–Cys-70. Glu-56 carries the 4-carboxyglutamate modification. Pro-58 is subject to 4-hydroxyproline. Position 71 is a serine amide (Ser-71).

Post-translationally, brominated at one of the Trp residues. As to expression, expressed by the venom duct.

It localises to the secreted. The polypeptide is Conotoxin Gla(2)-TxVI/B (Conus textile (Cloth-of-gold cone)).